Here is a 254-residue protein sequence, read N- to C-terminus: Large ribosomal subunit protein uL4 (254 aa).

The interval 45 to 70 (PWGNDPEAGKRTSAKGWGSGRGTARV) is disordered.

The protein belongs to the universal ribosomal protein uL4 family. Part of the 50S ribosomal subunit.

Its function is as follows. One of the primary rRNA binding proteins, this protein initially binds near the 5'-end of the 23S rRNA. It is important during the early stages of 50S assembly. It makes multiple contacts with different domains of the 23S rRNA in the assembled 50S subunit and ribosome. In terms of biological role, forms part of the polypeptide exit tunnel. In Methanobrevibacter smithii (strain ATCC 35061 / DSM 861 / OCM 144 / PS), this protein is Large ribosomal subunit protein uL4.